A 251-amino-acid polypeptide reads, in one-letter code: Imidazole glycerol phosphate synthase subunit HisF (251 aa).

Residues aspartate 11 and aspartate 130 contribute to the active site.

The protein belongs to the HisA/HisF family. In terms of assembly, heterodimer of HisH and HisF.

Its subcellular location is the cytoplasm. It catalyses the reaction 5-[(5-phospho-1-deoxy-D-ribulos-1-ylimino)methylamino]-1-(5-phospho-beta-D-ribosyl)imidazole-4-carboxamide + L-glutamine = D-erythro-1-(imidazol-4-yl)glycerol 3-phosphate + 5-amino-1-(5-phospho-beta-D-ribosyl)imidazole-4-carboxamide + L-glutamate + H(+). Its pathway is amino-acid biosynthesis; L-histidine biosynthesis; L-histidine from 5-phospho-alpha-D-ribose 1-diphosphate: step 5/9. Its function is as follows. IGPS catalyzes the conversion of PRFAR and glutamine to IGP, AICAR and glutamate. The HisF subunit catalyzes the cyclization activity that produces IGP and AICAR from PRFAR using the ammonia provided by the HisH subunit. This is Imidazole glycerol phosphate synthase subunit HisF from Phocaeicola vulgatus (strain ATCC 8482 / DSM 1447 / JCM 5826 / CCUG 4940 / NBRC 14291 / NCTC 11154) (Bacteroides vulgatus).